We begin with the raw amino-acid sequence, 495 residues long: UDP-glycosyltransferase 71B7 (495 aa).

UDP-alpha-D-glucose contacts are provided by residues S284, 351–353 (APQ), 368–376 (HCGWNSTLE), and 390–393 (YAEQ).

It belongs to the UDP-glycosyltransferase family.

The sequence is that of UDP-glycosyltransferase 71B7 (UGT71B7) from Arabidopsis thaliana (Mouse-ear cress).